Here is a 618-residue protein sequence, read N- to C-terminus: Carbamoyl phosphate synthase large chain, C-terminal section (618 aa).

Residues 1–78 (MDMEKLKEIL…ETFVYKEQDE (78 aa)) are oligomerization domain. A carbamoyl phosphate synthetic domain region spans residues 79 to 477 (SNPSDRKKVI…YKAQLSANME (399 aa)). The ATP-grasp domain maps to 208–399 (SKLLKKLNIP…LAKLATKIML (192 aa)). ATP is bound by residues arginine 244, lysine 283, leucine 285, glutamate 290, glycine 315, valine 316, histidine 317, serine 318, glutamine 358, and glutamate 370. Mg(2+)-binding residues include glutamine 358, glutamate 370, and asparagine 372. Positions 358, 370, and 372 each coordinate Mn(2+). One can recognise an MGS-like domain in the interval 476-618 (MELPIVGNVF…ELDARIKNRF (143 aa)). Residues 478–618 (LPIVGNVFIS…ELDARIKNRF (141 aa)) form an allosteric domain region.

It belongs to the CarB family. As to quaternary structure, composed of two chains; the small (or glutamine) chain promotes the hydrolysis of glutamine to ammonia, which is used by the large (or ammonia) chain to synthesize carbamoyl phosphate. Tetramer of heterodimers (alpha,beta)4. Requires Mg(2+) as cofactor. Mn(2+) is required as a cofactor.

It catalyses the reaction hydrogencarbonate + L-glutamine + 2 ATP + H2O = carbamoyl phosphate + L-glutamate + 2 ADP + phosphate + 2 H(+). It carries out the reaction hydrogencarbonate + NH4(+) + 2 ATP = carbamoyl phosphate + 2 ADP + phosphate + 2 H(+). It participates in amino-acid biosynthesis; L-arginine biosynthesis; carbamoyl phosphate from bicarbonate: step 1/1. Its pathway is pyrimidine metabolism; UMP biosynthesis via de novo pathway; (S)-dihydroorotate from bicarbonate: step 1/3. Large subunit of the glutamine-dependent carbamoyl phosphate synthetase (CPSase). CPSase catalyzes the formation of carbamoyl phosphate from the ammonia moiety of glutamine, carbonate, and phosphate donated by ATP, constituting the first step of 2 biosynthetic pathways, one leading to arginine and/or urea and the other to pyrimidine nucleotides. The large subunit (synthetase) binds the substrates ammonia (free or transferred from glutamine from the small subunit), hydrogencarbonate and ATP and carries out an ATP-coupled ligase reaction, activating hydrogencarbonate by forming carboxy phosphate which reacts with ammonia to form carbamoyl phosphate. The protein is Carbamoyl phosphate synthase large chain, C-terminal section (carB2) of Methanocaldococcus jannaschii (strain ATCC 43067 / DSM 2661 / JAL-1 / JCM 10045 / NBRC 100440) (Methanococcus jannaschii).